The chain runs to 147 residues: Ribonuclease H (147 aa).

The RNase H type-1 domain maps to Met1–Ala142. Residues Asp9, Glu47, Asp69, and Asp134 each coordinate Mg(2+).

This sequence belongs to the RNase H family. As to quaternary structure, monomer. Mg(2+) is required as a cofactor.

It is found in the cytoplasm. The enzyme catalyses Endonucleolytic cleavage to 5'-phosphomonoester.. In terms of biological role, endonuclease that specifically degrades the RNA of RNA-DNA hybrids. This is Ribonuclease H from Symbiobacterium thermophilum (strain DSM 24528 / JCM 14929 / IAM 14863 / T).